Consider the following 249-residue polypeptide: Triosephosphate isomerase (249 aa).

Substrate contacts are provided by N10 and K12. H94 (electrophile) is an active-site residue. The Proton acceptor role is filled by E166.

This sequence belongs to the triosephosphate isomerase family. In terms of assembly, homodimer.

The catalysed reaction is D-glyceraldehyde 3-phosphate = dihydroxyacetone phosphate. The protein operates within carbohydrate biosynthesis; gluconeogenesis. It functions in the pathway carbohydrate degradation; glycolysis; D-glyceraldehyde 3-phosphate from glycerone phosphate: step 1/1. The protein is Triosephosphate isomerase (tpiA) of Emericella nidulans (strain FGSC A4 / ATCC 38163 / CBS 112.46 / NRRL 194 / M139) (Aspergillus nidulans).